We begin with the raw amino-acid sequence, 110 residues long: uncharacterized protein (110 aa).

The next 2 membrane-spanning stretches (helical) occupy residues 6–26 and 38–58; these read VSLY…IYNV and TSGP…IIGP.

It localises to the membrane. This is an uncharacterized protein from Saccharomyces cerevisiae (strain ATCC 204508 / S288c) (Baker's yeast).